The chain runs to 395 residues: Gastric triacylglycerol lipase (395 aa).

Positions 1–18 are cleaved as a signal peptide; that stretch reads MWLLLVTSVLSAFGGAHG. N-linked (GlcNAc...) asparagine glycosylation occurs at Asn-33. Residues 81-376 form the AB hydrolase-1 domain; that stretch reads LQHGLIASAT…LPYNHLDFIW (296 aa). The active-site Nucleophile is Ser-171. Cys-245 and Cys-254 are joined by a disulfide. Asn-270 is a glycosylation site (N-linked (GlcNAc...) asparagine). Active-site charge relay system residues include Asp-342 and His-371.

Belongs to the AB hydrolase superfamily. Lipase family.

The protein localises to the secreted. The catalysed reaction is a triacylglycerol + H2O = a diacylglycerol + a fatty acid + H(+). The enzyme catalyses 1,2,3-tri-(9Z-octadecenoyl)-glycerol + H2O = 1,2-di-(9Z-octadecenoyl)-sn-glycerol + (9Z)-octadecenoate + H(+). It catalyses the reaction 1,2,3-trioctanoylglycerol + H2O = 1,2-dioctanoyl-sn-glycerol + octanoate + H(+). In terms of biological role, catalyzes the hydrolysis of triacylglycerols to yield free fatty acids, diacylglycerol, monoacylglycerol, and glycerol. Shows a preferential hydrolysis at the sn-3 position of triacylglycerol. The sequence is that of Gastric triacylglycerol lipase (Lipf) from Mus musculus (Mouse).